We begin with the raw amino-acid sequence, 608 residues long: Endo-1,4-beta-xylanase C (608 aa).

The first 25 residues, 1–25 (MKTFSVTKSSVVFAMALGMASTAFA), serve as a signal peptide directing secretion. Residues 40 to 250 (TITSNQTGKI…VNGEVRGGHM (211 aa)) enclose the GH11 1 domain. E142 acts as the Nucleophile in catalysis. Residue E237 is the Proton donor of the active site. A compositionally biased stretch (low complexity) spans 263 to 294 (SDPVSSSSVKSSSSTDAPKSSSSKGNGNVSGK). The interval 263 to 296 (SDPVSSSSVKSSSSTDAPKSSSSKGNGNVSGKID) is disordered. One can recognise a GH11 2 domain in the interval 316-514 (NSSVTGNVGS…GSGSFDVTYF (199 aa)). E409 serves as the catalytic Nucleophile. E501 (proton donor) is an active-site residue. Positions 520–539 (AHPLAQPEPESSSSEAKVES) are disordered. Residues 527-539 (EPESSSSEAKVES) show a composition bias toward low complexity.

Belongs to the glycosyl hydrolase 11 (cellulase G) family.

The catalysed reaction is Endohydrolysis of (1-&gt;4)-beta-D-xylosidic linkages in xylans.. The protein operates within glycan degradation; xylan degradation. In terms of biological role, cleaves xylans with the production of xylose, xylobiose and xylo-oligosaccharides. In Fibrobacter succinogenes (strain ATCC 19169 / S85), this protein is Endo-1,4-beta-xylanase C (xynC).